The chain runs to 130 residues: RutC family protein HI_0719 (130 aa).

The active site involves Cys109.

This sequence belongs to the RutC family. In terms of assembly, homotrimer.

This Haemophilus influenzae (strain ATCC 51907 / DSM 11121 / KW20 / Rd) protein is RutC family protein HI_0719.